A 490-amino-acid polypeptide reads, in one-letter code: MTKQSADSNAKSGVTSEICHWASNLATDDIPSDVLERAKYLILDGIACAWVGARVPWSEKYVQATMSFEPPGACRVIGYGQKLGPVAAAMTNSAFIQATELDDYHSEAPLHSASIVLPAVFAASEVLAEQGKTISGIDVILAAIVGFESGPRIGKAIYGSDLLNNGWHCGAVYGAPAGALATGKLLGLTPDSMEDALGIACTQACGLMSAQYGGMVKRVQHGFAARNGLLGGLLAHGGYEAMKGVLERSYGGFLKMFTKGNGREPPYKEEEVVAGLGSFWHTFTIRIKLYACCGLVHGPVEAIENLQGRYPELLNRANLSNIRHVHVQLSTASNSHCGWIPEERPISSIAGQMSVAYILAVQLVDQQCLLSQFSEFDDNLERPEVWDLARKVTSSQSEEFDQDGNCLSAGRVRIEFNDGSSITESVEKPLGVKEPMPNERILHKYRTLAGSVTDESRVKEIEDLVLGLDRLTDISPLLELLNCPVKSPLV.

It belongs to the PrpD family.

Its subcellular location is the mitochondrion. The catalysed reaction is cis-aconitate + H(+) = itaconate + CO2. In terms of biological role, involved in the production of itaconic acid, a soluble unsaturated dicarboxylic acid mainly produced from sugars. This Aspergillus terreus protein is Cis-aconitate decarboxylase (cad1).